A 382-amino-acid polypeptide reads, in one-letter code: MSLNIFWFLPTHGDGKYLGTSDGARAVDHGYLQQIAQAADRLGFGGVLIPTGRSCEDSWLVAASLIPVTQRLKFLVALRPGIISPTVAARQAATLDRLSNGRALFNLVTGGDPDELAGDGLHLNHQERYEASVEFTRIWRKVLEGENVDYDGKHIQVKGAKLLYPPIQQPRPPLYFGGSSEAAQDLAAEQVELYLTWGEPPSAVAEKIAQVREKAAAQGREVRFGIRLHVIVRETNEEAWAAADRLISHLDDDTISRAQASLARFDSVGQQRMAALHGGNRDNLEVSPNLWAGVGLVRGGAGTALVGDGPTVAARVKEYAELGIDTFIFSGYPHLEESYRVAELLFPHLDVQRPEQPKTGGYVSPFGEMVANDILPKSVSQS.

The protein belongs to the SsuD family.

The catalysed reaction is an alkanesulfonate + FMNH2 + O2 = an aldehyde + FMN + sulfite + H2O + 2 H(+). Its function is as follows. Catalyzes the desulfonation of aliphatic sulfonates. The sequence is that of Alkanesulfonate monooxygenase from Pseudomonas putida (strain GB-1).